The following is a 171-amino-acid chain: RNA silencing suppressor p19 (171 aa).

Over residues 1–15 the composition is skewed to basic and acidic residues; sequence MERAIPGNDTREPAY. Residues 1–32 are disordered; sequence MERAIPGNDTREPAYGERWNGGPGGSTSPFQL.

Belongs to the tombusvirus protein p19 family. Homodimer.

Viral suppressor of RNA silencing which binds specifically to silencing RNAs (siRNAs). Acts as a molecular caliper to specifically select siRNAs based on the length of the duplex region of the RNA. This chain is RNA silencing suppressor p19, found in Capsicum annuum (Capsicum pepper).